A 96-amino-acid chain; its full sequence is MKIRPLHDRVIVKRMEEERKTASGIVIPDTAAEKPDQGEIVAVGAGKKDDQGKLISLDVKVGDRVLFGKYAGQTVKVEGEELLVMREEDIMGVVEQ.

The protein belongs to the GroES chaperonin family. As to quaternary structure, heptamer of 7 subunits arranged in a ring. Interacts with the chaperonin GroEL.

It localises to the cytoplasm. In terms of biological role, together with the chaperonin GroEL, plays an essential role in assisting protein folding. The GroEL-GroES system forms a nano-cage that allows encapsulation of the non-native substrate proteins and provides a physical environment optimized to promote and accelerate protein folding. GroES binds to the apical surface of the GroEL ring, thereby capping the opening of the GroEL channel. The chain is Co-chaperonin GroES from Thiobacillus denitrificans (strain ATCC 25259 / T1).